A 443-amino-acid polypeptide reads, in one-letter code: Thymidine phosphorylase (443 aa).

This sequence belongs to the thymidine/pyrimidine-nucleoside phosphorylase family. Homodimer.

It carries out the reaction thymidine + phosphate = 2-deoxy-alpha-D-ribose 1-phosphate + thymine. It participates in pyrimidine metabolism; dTMP biosynthesis via salvage pathway; dTMP from thymine: step 1/2. Functionally, the enzymes which catalyze the reversible phosphorolysis of pyrimidine nucleosides are involved in the degradation of these compounds and in their utilization as carbon and energy sources, or in the rescue of pyrimidine bases for nucleotide synthesis. This Shewanella sediminis (strain HAW-EB3) protein is Thymidine phosphorylase.